The chain runs to 244 residues: tRNA (guanine-N(1)-)-methyltransferase (244 aa).

S-adenosyl-L-methionine contacts are provided by residues Gly113 and 133 to 138; that span reads IGDYVL.

This sequence belongs to the RNA methyltransferase TrmD family. Homodimer.

Its subcellular location is the cytoplasm. It carries out the reaction guanosine(37) in tRNA + S-adenosyl-L-methionine = N(1)-methylguanosine(37) in tRNA + S-adenosyl-L-homocysteine + H(+). Specifically methylates guanosine-37 in various tRNAs. This is tRNA (guanine-N(1)-)-methyltransferase from Bacillus anthracis (strain A0248).